The sequence spans 208 residues: Probable splicing factor, arginine/serine-rich 5 (208 aa).

Residues 2 to 74 enclose the RRM domain; the sequence is PRLYLGKIPY…MRLVVEMARG (73 aa). The segment at 71-208 is disordered; sequence MARGKPRGND…RSPSPGSPKD (138 aa). The span at 84–123 shows a compositional bias: basic residues; it reads SRSPRRRSRSPRRRSRTPPRRRSRSRDRKRSRRSRSRSSS. Basic and acidic residues predominate over residues 128-153; the sequence is PVRESRRRSESRSPSPKRDLKREASR.

This sequence belongs to the splicing factor SR family. Extensively phosphorylated on serine residues in the RS domain.

It is found in the nucleus. In terms of biological role, plays a functionally redundant role in shifting germ cell sexual differentiation in hermaphrodites. In Caenorhabditis elegans, this protein is Probable splicing factor, arginine/serine-rich 5 (rsp-5).